Consider the following 154-residue polypeptide: Large ribosomal subunit protein uL15 (154 aa).

Positions Met1–Arg13 are enriched in basic and acidic residues. The segment at Met1–Gly52 is disordered.

This sequence belongs to the universal ribosomal protein uL15 family. In terms of assembly, part of the 50S ribosomal subunit.

Its function is as follows. Binds to the 23S rRNA. In Deinococcus deserti (strain DSM 17065 / CIP 109153 / LMG 22923 / VCD115), this protein is Large ribosomal subunit protein uL15.